The primary structure comprises 269 residues: Shikimate dehydrogenase (NADP(+)) (269 aa).

Residues S17–S19 and T64 each bind shikimate. The active-site Proton acceptor is K68. E80 provides a ligand contact to NADP(+). Shikimate-binding residues include N89 and D105. Residues G130–A134, N154–K159, and M213 each bind NADP(+). Shikimate is bound at residue Y215. NADP(+) is bound at residue G237.

It belongs to the shikimate dehydrogenase family. In terms of assembly, homodimer.

It catalyses the reaction shikimate + NADP(+) = 3-dehydroshikimate + NADPH + H(+). The protein operates within metabolic intermediate biosynthesis; chorismate biosynthesis; chorismate from D-erythrose 4-phosphate and phosphoenolpyruvate: step 4/7. Functionally, involved in the biosynthesis of the chorismate, which leads to the biosynthesis of aromatic amino acids. Catalyzes the reversible NADPH linked reduction of 3-dehydroshikimate (DHSA) to yield shikimate (SA). This Neisseria lactamica protein is Shikimate dehydrogenase (NADP(+)).